The sequence spans 1642 residues: Cholesterol transporter ABCA5 (1642 aa).

The chain crosses the membrane as a helical span at residues 32 to 52 (SVQEILFPLFFLFWLILVSMM). Asn-86 is a glycosylation site (N-linked (GlcNAc...) asparagine). The next 5 membrane-spanning stretches (helical) occupy residues 220–240 (VILI…AIHI), 264–284 (LSWV…MAVI), 297–317 (IVIF…ALML), 328–348 (GVVE…IVLI), and 355–375 (LVWL…AQVM). Asn-388 carries an N-linked (GlcNAc...) asparagine glycan. A helical transmembrane segment spans residues 396–416 (LIITIIMLALDSVFYVLLAVY). N-linked (GlcNAc...) asparagine glycosylation occurs at Asn-458. In terms of domain architecture, ABC transporter 1 spans 478 to 713 (IRISGIQKSY…WGIGYRLSMY (236 aa)). Residue 514-521 (GHSGTGKS) participates in ATP binding. The helical transmembrane segment at 864 to 884 (AVLLLLLIFFAVQIFMFFLHH) threads the bilayer. Asn-919 carries an N-linked (GlcNAc...) asparagine glycan. A helical transmembrane segment spans residues 967–987 (VFSAVFNSTMVYCLPVMMNII). The N-linked (GlcNAc...) asparagine glycan is linked to Asn-996. 6 consecutive transmembrane segments (helical) span residues 1021–1041 (LYFQ…YFAM), 1071–1091 (VVDI…LFAF), 1102–1122 (FLAV…FTYI), 1138–1158 (SFIY…TFFL), 1164–1184 (AVFH…GCLI), and 1207–1227 (LLVA…LLQH). Residues 1290-1533 (IMVCNLHKEY…FGKGYFLEIK (244 aa)) enclose the ABC transporter 2 domain. 1333–1340 (GPNGAGKS) contacts ATP.

Belongs to the ABC transporter superfamily. ABCA family. N-glycosylated. Expressed in cardiomyocytes, oligodendrocytes and astrocytes in brain, alveolar type 2 cells in lung and follicular cells in the thyroid gland (at protein level). Detected in brain, testis, lung, heart, liver, kidney, skeletal muscle and placenta. Strongly expressed in the basal cells of the seminiferous tubules, interstitial cells consisting of Leydig cells, as well as the tunica albuginea. In the epididymis, specifically and very strongly expressed in the connective tissue outlining the cylindrical epithelium in the corpus and cauda regions, including fibrocytes and smooth muscle cells, as well as within the basal and tall columnar cells of the corpus cylindrical epithelium. Highly expressed in the brain with high expression in cortical and hippocampal neurons and moderately in the lung.

The protein resides in the golgi apparatus membrane. It is found in the lysosome membrane. It localises to the late endosome membrane. Its subcellular location is the cell membrane. It catalyses the reaction cholesterol(in) + ATP + H2O = cholesterol(out) + ADP + phosphate + H(+). In terms of biological role, cholesterol efflux transporter in macrophages that is responsible for APOAI/high-density lipoproteins (HDL) formation at the plasma membrane under high cholesterol levels and participates in reverse cholesterol transport. May play a role in the processing of autolysosomes. This Mus musculus (Mouse) protein is Cholesterol transporter ABCA5.